The chain runs to 194 residues: ATP-dependent Clp protease proteolytic subunit (194 aa).

The active-site Nucleophile is Ser-98. Residue His-123 is part of the active site.

It belongs to the peptidase S14 family. As to quaternary structure, fourteen ClpP subunits assemble into 2 heptameric rings which stack back to back to give a disk-like structure with a central cavity, resembling the structure of eukaryotic proteasomes.

It localises to the cytoplasm. It carries out the reaction Hydrolysis of proteins to small peptides in the presence of ATP and magnesium. alpha-casein is the usual test substrate. In the absence of ATP, only oligopeptides shorter than five residues are hydrolyzed (such as succinyl-Leu-Tyr-|-NHMec, and Leu-Tyr-Leu-|-Tyr-Trp, in which cleavage of the -Tyr-|-Leu- and -Tyr-|-Trp bonds also occurs).. Cleaves peptides in various proteins in a process that requires ATP hydrolysis. Has a chymotrypsin-like activity. Plays a major role in the degradation of misfolded proteins. This chain is ATP-dependent Clp protease proteolytic subunit, found in Staphylococcus saprophyticus subsp. saprophyticus (strain ATCC 15305 / DSM 20229 / NCIMB 8711 / NCTC 7292 / S-41).